A 383-amino-acid polypeptide reads, in one-letter code: Succinyl-diaminopimelate desuccinylase (383 aa).

H73 contacts Zn(2+). Residue D75 is part of the active site. Position 107 (D107) interacts with Zn(2+). The active-site Proton acceptor is the E141. 3 residues coordinate Zn(2+): E142, E170, and H356.

The protein belongs to the peptidase M20A family. DapE subfamily. Homodimer. It depends on Zn(2+) as a cofactor. Requires Co(2+) as cofactor.

It carries out the reaction N-succinyl-(2S,6S)-2,6-diaminopimelate + H2O = (2S,6S)-2,6-diaminopimelate + succinate. Its pathway is amino-acid biosynthesis; L-lysine biosynthesis via DAP pathway; LL-2,6-diaminopimelate from (S)-tetrahydrodipicolinate (succinylase route): step 3/3. Catalyzes the hydrolysis of N-succinyl-L,L-diaminopimelic acid (SDAP), forming succinate and LL-2,6-diaminopimelate (DAP), an intermediate involved in the bacterial biosynthesis of lysine and meso-diaminopimelic acid, an essential component of bacterial cell walls. The chain is Succinyl-diaminopimelate desuccinylase from Pseudomonas paraeruginosa (strain DSM 24068 / PA7) (Pseudomonas aeruginosa (strain PA7)).